The sequence spans 240 residues: 2,3-bisphosphoglycerate-dependent phosphoglycerate mutase (240 aa).

Substrate contacts are provided by residues 5–12 (RHGESVWN), 18–19 (TG), Arg-57, 84–87 (ERHY), Lys-95, 111–112 (RR), and 180–181 (GN). Residue His-6 is the Tele-phosphohistidine intermediate of the active site. Glu-84 serves as the catalytic Proton donor/acceptor.

Belongs to the phosphoglycerate mutase family. BPG-dependent PGAM subfamily. As to quaternary structure, homodimer.

The enzyme catalyses (2R)-2-phosphoglycerate = (2R)-3-phosphoglycerate. It functions in the pathway carbohydrate degradation; glycolysis; pyruvate from D-glyceraldehyde 3-phosphate: step 3/5. Functionally, catalyzes the interconversion of 2-phosphoglycerate and 3-phosphoglycerate. The protein is 2,3-bisphosphoglycerate-dependent phosphoglycerate mutase of Nitrosococcus oceani (strain ATCC 19707 / BCRC 17464 / JCM 30415 / NCIMB 11848 / C-107).